We begin with the raw amino-acid sequence, 752 residues long: Kaurene synthase like 2, chloroplastic (752 aa).

A chloroplast-targeting transit peptide spans 1 to 28 (MSLLLSNSALVGPKFRSSRISHASASLD). Mg(2+) contacts are provided by Asp-538, Asp-542, Asn-682, and Glu-690. Residues 538-542 (DDLFD) carry the DDXXD motif motif.

The protein belongs to the terpene synthase family. Mg(2+) is required as a cofactor. Highly expressed in leaves.

Its subcellular location is the plastid. The protein resides in the chloroplast. The protein operates within secondary metabolite biosynthesis; terpenoid biosynthesis. In terms of biological role, involved in the biosynthesis of ent-kaurene diterpenoids natural products such as oridonin, miltiradiene, eriocalyxin B and nezukol, known to exhibit antitumor, anti-inflammatory and antibacterial activities. Catalyzes the conversion of ent-copalyl diphosphate (ent-CPP) to ent-isopimaradiene like compounds. The protein is Kaurene synthase like 2, chloroplastic of Isodon rubescens (Rabdosia rubescens).